The following is a 476-amino-acid chain: Bifunctional protein HldE (476 aa).

A ribokinase region spans residues 1–319 (MAQYSAQFPH…NAIHGRTVSG (319 aa)). Position 195-198 (195-198 (NMSE)) interacts with ATP. Aspartate 264 is a catalytic residue. Residues 344 to 476 (MTNGCFDILH…VIKKIRDLKD (133 aa)) are cytidylyltransferase.

This sequence in the N-terminal section; belongs to the carbohydrate kinase PfkB family. In the C-terminal section; belongs to the cytidylyltransferase family. As to quaternary structure, homodimer.

It carries out the reaction D-glycero-beta-D-manno-heptose 7-phosphate + ATP = D-glycero-beta-D-manno-heptose 1,7-bisphosphate + ADP + H(+). The enzyme catalyses D-glycero-beta-D-manno-heptose 1-phosphate + ATP + H(+) = ADP-D-glycero-beta-D-manno-heptose + diphosphate. It functions in the pathway nucleotide-sugar biosynthesis; ADP-L-glycero-beta-D-manno-heptose biosynthesis; ADP-L-glycero-beta-D-manno-heptose from D-glycero-beta-D-manno-heptose 7-phosphate: step 1/4. It participates in nucleotide-sugar biosynthesis; ADP-L-glycero-beta-D-manno-heptose biosynthesis; ADP-L-glycero-beta-D-manno-heptose from D-glycero-beta-D-manno-heptose 7-phosphate: step 3/4. In terms of biological role, catalyzes the phosphorylation of D-glycero-D-manno-heptose 7-phosphate at the C-1 position to selectively form D-glycero-beta-D-manno-heptose-1,7-bisphosphate. Catalyzes the ADP transfer from ATP to D-glycero-beta-D-manno-heptose 1-phosphate, yielding ADP-D-glycero-beta-D-manno-heptose. This is Bifunctional protein HldE from Actinobacillus succinogenes (strain ATCC 55618 / DSM 22257 / CCUG 43843 / 130Z).